The following is a 334-amino-acid chain: tRNA dimethylallyltransferase (334 aa).

22–29 (GPTASGKT) is a binding site for ATP. 24–29 (TASGKT) serves as a coordination point for substrate.

This sequence belongs to the IPP transferase family. As to quaternary structure, monomer. It depends on Mg(2+) as a cofactor.

The catalysed reaction is adenosine(37) in tRNA + dimethylallyl diphosphate = N(6)-dimethylallyladenosine(37) in tRNA + diphosphate. Functionally, catalyzes the transfer of a dimethylallyl group onto the adenine at position 37 in tRNAs that read codons beginning with uridine, leading to the formation of N6-(dimethylallyl)adenosine (i(6)A). This is tRNA dimethylallyltransferase from Rhodopirellula baltica (strain DSM 10527 / NCIMB 13988 / SH1).